Reading from the N-terminus, the 1422-residue chain is DNA-directed RNA polymerase subunit beta (1422 aa).

The disordered stretch occupies residues 1392-1422 (QAAREAAERDLGGGPLGAPRGAVASGEKSSA).

It belongs to the RNA polymerase beta chain family. In terms of assembly, the RNAP catalytic core consists of 2 alpha, 1 beta, 1 beta' and 1 omega subunit. When a sigma factor is associated with the core the holoenzyme is formed, which can initiate transcription.

It catalyses the reaction RNA(n) + a ribonucleoside 5'-triphosphate = RNA(n+1) + diphosphate. In terms of biological role, DNA-dependent RNA polymerase catalyzes the transcription of DNA into RNA using the four ribonucleoside triphosphates as substrates. In Anaeromyxobacter dehalogenans (strain 2CP-C), this protein is DNA-directed RNA polymerase subunit beta.